A 511-amino-acid chain; its full sequence is Cobyric acid synthase (511 aa).

The GATase cobBQ-type domain occupies 251 to 443 (LLDIAIICLP…IHGIFDNDVF (193 aa)). Residue Cys332 is the Nucleophile of the active site. Residue His435 is part of the active site.

It belongs to the CobB/CobQ family. CobQ subfamily.

Its pathway is cofactor biosynthesis; adenosylcobalamin biosynthesis. Catalyzes amidations at positions B, D, E, and G on adenosylcobyrinic A,C-diamide. NH(2) groups are provided by glutamine, and one molecule of ATP is hydrogenolyzed for each amidation. This Listeria monocytogenes serotype 4a (strain HCC23) protein is Cobyric acid synthase.